Here is a 383-residue protein sequence, read N- to C-terminus: Probable cell wall hydrolase LytN (383 aa).

Residues 1–49 form the signal peptide; that stretch reads MFIYYCKECSIMNKQQSKVRYSIRKVSIGILSISIGMFLALGMSNKAYA. Residues 175–219 form the LysM domain; sequence QIYTVKKGDTLSAIALKYKTTVSNIQNTNNIANPNLIFIGQKLKV. Residues 241–378 form the Peptidase C51 domain; the sequence is NSSTLNYLKT…NYENDMIFIR (138 aa).

The protein resides in the secreted. Probably involved in peptidoglycan hydrolysis. This is Probable cell wall hydrolase LytN (lytN) from Staphylococcus aureus (strain Mu50 / ATCC 700699).